A 660-amino-acid chain; its full sequence is Methionine--tRNA ligase 1 (660 aa).

Residues 15-25 (YYPSGKLHIGH) carry the 'HIGH' region motif. The short motif at 310 to 314 (KMSKS) is the 'KMSKS' region element. Residue lysine 313 participates in ATP binding. The tRNA-binding domain maps to 560–660 (DFFKVELRVA…QNIPNGTKIK (101 aa)).

This sequence belongs to the class-I aminoacyl-tRNA synthetase family. MetG type 2B subfamily. Homodimer.

It is found in the cytoplasm. It carries out the reaction tRNA(Met) + L-methionine + ATP = L-methionyl-tRNA(Met) + AMP + diphosphate. Functionally, is required not only for elongation of protein synthesis but also for the initiation of all mRNA translation through initiator tRNA(fMet) aminoacylation. The protein is Methionine--tRNA ligase 1 of Bacillus anthracis.